Consider the following 386-residue polypeptide: Small ribosomal subunit protein uS3m (386 aa).

Belongs to the universal ribosomal protein uS3 family.

The protein localises to the mitochondrion. Its function is as follows. Essential for mitochondrial protein synthesis and required for the maturation of small ribosomal subunits. The protein is Small ribosomal subunit protein uS3m (VAR1) of Wickerhamomyces canadensis (Yeast).